A 549-amino-acid chain; its full sequence is Arginine--tRNA ligase (549 aa).

The short motif at 132–142 (ANPTGPLHIGH) is the 'HIGH' region element.

It belongs to the class-I aminoacyl-tRNA synthetase family. Monomer.

The protein resides in the cytoplasm. The enzyme catalyses tRNA(Arg) + L-arginine + ATP = L-arginyl-tRNA(Arg) + AMP + diphosphate. This Paenarthrobacter aurescens (strain TC1) protein is Arginine--tRNA ligase.